A 104-amino-acid polypeptide reads, in one-letter code: Large ribosomal subunit protein uL24 (104 aa).

The span at 85–96 (IKRELGAKEKAR) shows a compositional bias: basic and acidic residues. The tract at residues 85–104 (IKRELGAKEKARADRRKTAK) is disordered.

This sequence belongs to the universal ribosomal protein uL24 family. In terms of assembly, part of the 50S ribosomal subunit.

Functionally, one of two assembly initiator proteins, it binds directly to the 5'-end of the 23S rRNA, where it nucleates assembly of the 50S subunit. In terms of biological role, one of the proteins that surrounds the polypeptide exit tunnel on the outside of the subunit. The protein is Large ribosomal subunit protein uL24 of Anaeromyxobacter sp. (strain Fw109-5).